Consider the following 483-residue polypeptide: Protein DETOXIFICATION 6 (483 aa).

12 helical membrane-spanning segments follow: residues 38 to 58, 69 to 89, 113 to 133, 146 to 166, 187 to 207, 211 to 231, 263 to 283, 292 to 312, 334 to 354, 376 to 396, 405 to 425, and 436 to 456; these read ALPM…SVMV, GVAL…FGLA, FSAI…WFYM, ISKV…AQAV, AITT…AFGL, GAAL…ALYV, AAMT…SGLL, VLSI…GIGA, VFAG…LLFI, LSPL…LGGV, IGAW…GLFL, and LWIG…IVTA.

It belongs to the multi antimicrobial extrusion (MATE) (TC 2.A.66.1) family.

It is found in the membrane. This Arabidopsis thaliana (Mouse-ear cress) protein is Protein DETOXIFICATION 6.